We begin with the raw amino-acid sequence, 113 residues long: Ribonuclease P protein component (113 aa).

Belongs to the RnpA family. In terms of assembly, consists of a catalytic RNA component (M1 or rnpB) and a protein subunit.

It carries out the reaction Endonucleolytic cleavage of RNA, removing 5'-extranucleotides from tRNA precursor.. In terms of biological role, RNaseP catalyzes the removal of the 5'-leader sequence from pre-tRNA to produce the mature 5'-terminus. It can also cleave other RNA substrates such as 4.5S RNA. The protein component plays an auxiliary but essential role in vivo by binding to the 5'-leader sequence and broadening the substrate specificity of the ribozyme. The sequence is that of Ribonuclease P protein component from Ligilactobacillus salivarius (strain UCC118) (Lactobacillus salivarius).